The following is a 208-amino-acid chain: Uracil phosphoribosyltransferase (208 aa).

5-phospho-alpha-D-ribose 1-diphosphate contacts are provided by residues R78, R103, and 130 to 138 (DPMLATANS). Uracil is bound by residues I193 and 198–200 (GDA). Residue D199 participates in 5-phospho-alpha-D-ribose 1-diphosphate binding.

Belongs to the UPRTase family. It depends on Mg(2+) as a cofactor.

It carries out the reaction UMP + diphosphate = 5-phospho-alpha-D-ribose 1-diphosphate + uracil. Its pathway is pyrimidine metabolism; UMP biosynthesis via salvage pathway; UMP from uracil: step 1/1. Allosterically activated by GTP. Catalyzes the conversion of uracil and 5-phospho-alpha-D-ribose 1-diphosphate (PRPP) to UMP and diphosphate. This chain is Uracil phosphoribosyltransferase, found in Brucella abortus biovar 1 (strain 9-941).